A 730-amino-acid chain; its full sequence is Polyribonucleotide nucleotidyltransferase (730 aa).

Residues Asp489 and Asp495 each contribute to the Mg(2+) site. The KH domain occupies 556-615 (PKIDTIKVDVDKIKIVIGKGGETIDKIIEETGVKIDIDEDGNIAIYSSDQEAINRTKEII). The S1 motif domain occupies 625 to 693 (GEIYEAEVVR…DKGRIDASMK (69 aa)). The segment at 691 to 730 (SMKALLPRPPRSEKSNKEDHQSVRHHGSPKDDKGKEKYDK) is disordered. The segment covering 700–730 (PRSEKSNKEDHQSVRHHGSPKDDKGKEKYDK) has biased composition (basic and acidic residues).

Belongs to the polyribonucleotide nucleotidyltransferase family. It depends on Mg(2+) as a cofactor.

The protein localises to the cytoplasm. It catalyses the reaction RNA(n+1) + phosphate = RNA(n) + a ribonucleoside 5'-diphosphate. In terms of biological role, involved in mRNA degradation. Catalyzes the phosphorolysis of single-stranded polyribonucleotides processively in the 3'- to 5'-direction. The polypeptide is Polyribonucleotide nucleotidyltransferase (Streptococcus mutans serotype c (strain ATCC 700610 / UA159)).